The primary structure comprises 694 residues: MAATQATAARKFPEGLRVLAVDDSPVCLMLLEALLRRCKYQPTMTRDAATALRMLRERPGDFDLVISDVHMLDMDGFKLLELIGLEMDLPVIMQSANGELETMMKGVTHGACDYLVKPVSLKDIQNIWQHVWRKRKLDIRNHNGGYNDGGELVGATRTKRKYTRKMRNDGDNYGENKENMDSTLKRQRVVWTPELHRDFVIAVHELGVDRAVPRKILRMMKVDYMTRENIASHLQKYRLYLKRISTQTGMDPDQFPEKWKYMNELDALKNYCENGRYRLTPAIASSSSSNPFARMNSASALATNGFLPTHSVQLKNSQRNMAMGTVGHGGSPGNNPVFQPLQNSSNARKCFPSGPSGSSFANISNGLVLDTDDSGSSYAGMFCKSMWETSNGSPSCHSGNSSANKSNNGVSAPANQFQVQSKFGFSALANQFPVQSNCGFSAPANQYQVQSNGGFSVPANQFPVQSNGEFLAPTNQFPVQYPEVNNQPLVQMNQSSTNHFSTIGNDYQFPDLANCSKYWQPTAPSMFPDLGHNDGTSFRPSQANIANINQLSSFAASSGQEPMFGDELHGQMSPIMSTISLSDFDDQMGSFNIGNDTSPAEMMHDNFSLGSDSNISSSTPTDSSFGSTFPDFHLDSPEMPAQMLNGGDEDGILLPVLDDTVDQQDLFDQLDENNGREKLGSGRCVRKGPFECFF.

In terms of domain architecture, Response regulatory spans 17-132 (RVLAVDDSPV…DIQNIWQHVW (116 aa)). A 4-aspartylphosphate modification is found at Asp68. In terms of domain architecture, HTH myb-type spans 183–242 (TLKRQRVVWTPELHRDFVIAVHELGVDRAVPRKILRMMKVDYMTRENIASHLQKYRLYLK). Positions 213–238 (PRKILRMMKVDYMTRENIASHLQKYR) form a DNA-binding region, H-T-H motif. The interval 326 to 349 (VGHGGSPGNNPVFQPLQNSSNARK) is disordered. Polar residues predominate over residues 333–347 (GNNPVFQPLQNSSNA).

The protein belongs to the ARR family. Type-B subfamily. Two-component system major event consists of a His-to-Asp phosphorelay between a sensor histidine kinase (HK) and a response regulator (RR). In plants, the His-to-Asp phosphorelay involves an additional intermediate named Histidine-containing phosphotransfer protein (HPt). This multistep phosphorelay consists of a His-Asp-His-Asp sequential transfer of a phosphate group between first a His and an Asp of the HK protein, followed by the transfer to a conserved His of the HPt protein and finally the transfer to an Asp in the receiver domain of the RR protein.

The protein localises to the nucleus. Functionally, transcriptional activator that binds specific DNA sequence. Functions as a response regulator involved in His-to-Asp phosphorelay signal transduction system. Phosphorylation of the Asp residue in the receiver domain activates the ability of the protein to promote the transcription of target genes. May directly activate some type-A response regulators in response to cytokinins. The polypeptide is Two-component response regulator ORR25 (Oryza sativa subsp. japonica (Rice)).